An 89-amino-acid chain; its full sequence is Acylphosphatase (89 aa).

In terms of domain architecture, Acylphosphatase-like spans 3 to 89; sequence RMTAWVHGFV…RGDLTGFVER (87 aa). Residues Arg-18 and Asn-36 contribute to the active site.

This sequence belongs to the acylphosphatase family.

The catalysed reaction is an acyl phosphate + H2O = a carboxylate + phosphate + H(+). In Rhodococcus jostii (strain RHA1), this protein is Acylphosphatase (acyP).